Reading from the N-terminus, the 36-residue chain is Toxin Bcg III 29.21 (36 aa).

The cysteines at positions 6 and 31 are disulfide-linked.

Its subcellular location is the secreted. It is found in the nematocyst. In Bunodosoma cangicum (Sea anemone), this protein is Toxin Bcg III 29.21.